Consider the following 362-residue polypeptide: S-adenosylmethionine:tRNA ribosyltransferase-isomerase (362 aa).

The protein belongs to the QueA family. As to quaternary structure, monomer.

It localises to the cytoplasm. The enzyme catalyses 7-aminomethyl-7-carbaguanosine(34) in tRNA + S-adenosyl-L-methionine = epoxyqueuosine(34) in tRNA + adenine + L-methionine + 2 H(+). It participates in tRNA modification; tRNA-queuosine biosynthesis. In terms of biological role, transfers and isomerizes the ribose moiety from AdoMet to the 7-aminomethyl group of 7-deazaguanine (preQ1-tRNA) to give epoxyqueuosine (oQ-tRNA). In Deinococcus radiodurans (strain ATCC 13939 / DSM 20539 / JCM 16871 / CCUG 27074 / LMG 4051 / NBRC 15346 / NCIMB 9279 / VKM B-1422 / R1), this protein is S-adenosylmethionine:tRNA ribosyltransferase-isomerase.